A 329-amino-acid polypeptide reads, in one-letter code: MELGGAAGALGPSGPLLVCLCFGTLAAQAADTCPEVKLVGLEGSDKLSILRGCPGLPGAPGLKGETGAAGLKGERGLPGVPGKAGPAGPKGSTGAQGEKGARGEKGESGQLHSCATGPRTCTELLTRGHFLSGWHTIYLPDCRPLTVLCDMDTDGGGWTVFQRRKDGSVDFFRTWTAYKQGFGSQLGEFWLGNDNIHALTAQGTSELRVDLMDFEGNHRFAKYQSFRMADEAEKYKLVLGAFVEGNAGDSLTDHGNHFFSTKDRDNDESPSNCAAQFQGAWWYHSCHSSNLNGRYLRGPHTSYANGINWKSWGRYNYSYKVSEMKLRLT.

Positions 1–29 are cleaved as a signal peptide; that stretch reads MELGGAAGALGPSGPLLVCLCFGTLAAQA. Residues 52–111 form the Collagen-like domain; sequence GCPGLPGAPGLKGETGAAGLKGERGLPGVPGKAGPAGPKGSTGAQGEKGARGEKGESGQL. The disordered stretch occupies residues 64-113; that stretch reads GETGAAGLKGERGLPGVPGKAGPAGPKGSTGAQGEKGARGEKGESGQLHS. Residues 77-90 are compositionally biased toward low complexity; that stretch reads LPGVPGKAGPAGPK. In terms of domain architecture, Fibrinogen C-terminal spans 112–329; it reads HSCATGPRTC…KVSEMKLRLT (218 aa). Cystine bridges form between Cys114/Cys142 and Cys121/Cys149. Ca(2+) is bound by residues Asp265, Asp267, Ser269, and Ser271. The cysteines at positions 273 and 286 are disulfide-linked. A glycan (N-linked (GlcNAc...) asparagine) is linked at Asn316.

Belongs to the ficolin lectin family. In terms of assembly, homotrimer. Interacts with elastin. Interacts with MASP1 and MASP2.

It is found in the secreted. In terms of biological role, may function in innate immunity through activation of the lectin complement pathway. Calcium-dependent and GlcNAc-binding lectin. This is Ficolin-2 (FCN2) from Bos taurus (Bovine).